Reading from the N-terminus, the 434-residue chain is Maltotriose-binding protein (434 aa).

The first 20 residues, 1–20 (MRRATYAFALLAILVLGVVA), serve as a signal peptide directing secretion. A disordered region spans residues 28–52 (TTTPTQTSPATQPTTTQTPTQTETQ). Residues 29–52 (TTPTQTSPATQPTTTQTPTQTETQ) show a composition bias toward low complexity.

The protein belongs to the bacterial solute-binding protein 1 family.

Functionally, involved in an abc transport system for maltotriose. Binds maltotriose much more tightly than maltose. This is Maltotriose-binding protein (malE) from Pyrococcus furiosus (strain ATCC 43587 / DSM 3638 / JCM 8422 / Vc1).